The primary structure comprises 371 residues: DNA primase large subunit PriL (371 aa).

[4Fe-4S] cluster-binding residues include C230, C301, C310, and C317. The segment at 337 to 371 (EREKEEGKEKGNEEKKEKREEHEKKNEKGNEIKEK) is disordered.

The protein belongs to the eukaryotic-type primase large subunit family. As to quaternary structure, heterodimer of a small subunit (PriS) and a large subunit (PriL). The cofactor is [4Fe-4S] cluster.

In terms of biological role, regulatory subunit of DNA primase, an RNA polymerase that catalyzes the synthesis of short RNA molecules used as primers for DNA polymerase during DNA replication. Stabilizes and modulates the activity of the small subunit, increasing the rate of DNA synthesis, and conferring RNA synthesis capability. The DNA polymerase activity may enable DNA primase to also catalyze primer extension after primer synthesis. May also play a role in DNA repair. This is DNA primase large subunit PriL from Methanosarcina acetivorans (strain ATCC 35395 / DSM 2834 / JCM 12185 / C2A).